Reading from the N-terminus, the 1059-residue chain is Dihydropyrimidine dehydrogenase [NADP(+)] (1059 aa).

One can recognise a 4Fe-4S ferredoxin-type 1 domain in the interval 84–118; it reads ERGALKEAMRCLKCADAPCQKSCPTQLDVKSFITS. 8 residues coordinate [4Fe-4S] cluster: Cys94, Cys97, Cys102, Cys106, Cys145, Cys151, Cys155, and Gln171. FAD contacts are provided by residues 207 to 211, 231 to 239, Arg248, and Leu274; these read GCGPA and EKRAYIGGL. NADP(+)-binding positions include 354–357, 378–379, Arg385, 451–453, and 495–501; these read AGDT, RK, AFG, and DVAGVAE. Residue 494–503 coordinates FAD; the sequence is GDVAGVAETT. FMN is bound by residues Ser564 and 588–589; that span reads KT. Substrate contacts are provided by residues Asn623 and 682–684; that span reads NLS. Residue Cys685 is the Proton acceptor of the active site. Position 723 (Lys723) interacts with FMN. 750-751 is a binding site for substrate; sequence NT. FMN is bound by residues Gly781, 807–809, and 830–831; these read TGG and CS. 4Fe-4S ferredoxin-type domains follow at residues 955-987 and 989-1019; these read KVAI…FDPV and HQPH…MVPR. [4Fe-4S] cluster-binding residues include Cys964, Cys967, Cys970, Cys974, Cys998, Cys1001, Cys1004, and Cys1008.

The protein belongs to the dihydropyrimidine dehydrogenase family. Requires [4Fe-4S] cluster as cofactor. It depends on FAD as a cofactor. The cofactor is FMN.

The catalysed reaction is 5,6-dihydrouracil + NADP(+) = uracil + NADPH + H(+). It functions in the pathway amino-acid biosynthesis; beta-alanine biosynthesis. Functionally, involved in pyrimidine base degradation. Catalyzes the reduction of uracil and thymine. Involved in the degradation of the chemotherapeutic drug 5-fluorouracil. This Caenorhabditis elegans protein is Dihydropyrimidine dehydrogenase [NADP(+)] (dpyd-1).